We begin with the raw amino-acid sequence, 262 residues long: Probable DNA polymerase sliding clamp 1 (262 aa).

Residues 67 to 86 mediate DNA binding; it reads KCEHTYELGVNVLNMFKLLR.

It belongs to the PCNA family.

Functionally, sliding clamp subunit. Responsible for tethering the catalytic subunit of DNA polymerase to DNA during high-speed replication. The polypeptide is Probable DNA polymerase sliding clamp 1 (Chlorella (PBCV-1)).